A 433-amino-acid polypeptide reads, in one-letter code: Sulfhydrylase FUB7 (433 aa).

K211 is subject to N6-(pyridoxal phosphate)lysine.

This sequence belongs to the trans-sulfuration enzymes family. The cofactor is pyridoxal 5'-phosphate.

Its pathway is mycotoxin biosynthesis. Its function is as follows. Sulfhydrylase; part of the gene cluster that mediates the biosynthesis of fusaric acid, a mycotoxin with low to moderate toxicity to animals and humans, but with high phytotoxic properties. L-aspartate is suggested as fusaric acid amino acid precursor that is activated and further processed to O-acetyl-L-homoserine by cluster enzymes aspartate kinase FUB3 and homoserine O-acetyltransferase FUB5, as well as enzymes of the primary metabolism. The polyketide synthase (PKS) FUB1 generates the triketide trans-2-hexenal which is presumptively released by the hydrolase FUB4 and linked to the NRPS-bound amino acid precursor by NAD(P)-dependent dehydrogenase FUB6. FUB1, FUB4, and the non-canonical NRPS Fub8 may form an enzyme complex. Further processing of the NRPS-bound intermediate might be carried out by FUB6 and the sulfhydrylase FUB7, enabling a spontaneous electrocyclization to close the carbon backbone of fusaric acid. Dihydrofusaric acid is likely to be released via reduction by the thioester reductase (TR) domain of FUB8 whereupon the final oxidation to fusaric acid may (also) be performed by the FMN-dependent dehydrogenase FUB9. This Fusarium oxysporum f. sp. lycopersici (strain 4287 / CBS 123668 / FGSC 9935 / NRRL 34936) (Fusarium vascular wilt of tomato) protein is Sulfhydrylase FUB7.